Here is a 357-residue protein sequence, read N- to C-terminus: Cinnamyl alcohol dehydrogenase 7 (357 aa).

A Zn(2+)-binding site is contributed by Cys46. Position 48 (Thr48) interacts with NADP(+). Residues His68, Glu69, Cys99, Cys102, Cys105, Cys113, and Cys162 each coordinate Zn(2+). Residues Thr166, 187-192 (GLGGLG), 210-215 (STSERK), Thr250, Gly274, and 297-299 (SMV) contribute to the NADP(+) site.

The protein belongs to the zinc-containing alcohol dehydrogenase family. In terms of assembly, homodimer. The cofactor is Zn(2+). In terms of tissue distribution, expressed in the differentiation and elongation zones of primary and lateral roots. Expressed in the hypocotyl, cotyledon and leaf veins, hydathodes and trichomes. In stems, expressed in the vascular cambium region. Expressed in the style, anthers, stamen filaments, vascular tissues of sepals and stigmatic regions in flowers, and abscission, style and stigmatic regions of siliques and seed testa.

The catalysed reaction is (E)-cinnamyl alcohol + NADP(+) = (E)-cinnamaldehyde + NADPH + H(+). It functions in the pathway aromatic compound metabolism; phenylpropanoid biosynthesis. Involved in lignin biosynthesis. Catalyzes the final step specific for the production of lignin monomers. Catalyzes the NADPH-dependent reduction of coniferaldehyde, 5-hydroxyconiferaldehyde, sinapaldehyde, 4-coumaraldehyde and caffeyl aldehyde to their respective alcohols. This is Cinnamyl alcohol dehydrogenase 7 (CAD7) from Arabidopsis thaliana (Mouse-ear cress).